The following is a 272-amino-acid chain: MNKIFAAFKPRGLSSNAFLSTLKKKYKNKKAGYSGTLDPFAKGVLIVAFGQYTKLFRFLKKTPKTYKATLWLGVYSLSLDDQNIKEIKNIKEFDLANLQQIIDQMQGIISYTPPQFSAKRINGTRAYELAKKGIEANLKPCQMEVFDCKILSYNHPFLNIEITVSEGAYIRSYCELFARKLGINATLSSLERIKEGKFVYNNEKSLNVLKYINLKPNFIKDLNKLENGAKIFVEELKFHDEGDYYIETEKYFSIINIKENTVKYLLNKVEKC.

The active-site Nucleophile is Asp-38.

Belongs to the pseudouridine synthase TruB family. Type 1 subfamily.

The enzyme catalyses uridine(55) in tRNA = pseudouridine(55) in tRNA. In terms of biological role, responsible for synthesis of pseudouridine from uracil-55 in the psi GC loop of transfer RNAs. In Campylobacter jejuni subsp. jejuni serotype O:6 (strain 81116 / NCTC 11828), this protein is tRNA pseudouridine synthase B.